Here is a 148-residue protein sequence, read N- to C-terminus: Large ribosomal subunit protein bL9 (148 aa).

This sequence belongs to the bacterial ribosomal protein bL9 family.

Its function is as follows. Binds to the 23S rRNA. This Listeria monocytogenes serotype 4b (strain CLIP80459) protein is Large ribosomal subunit protein bL9.